The following is a 143-amino-acid chain: Holo-[acyl-carrier-protein] synthase (143 aa).

2 residues coordinate Mg(2+): Asp-9 and Glu-63.

This sequence belongs to the P-Pant transferase superfamily. AcpS family. Mg(2+) is required as a cofactor.

Its subcellular location is the cytoplasm. The enzyme catalyses apo-[ACP] + CoA = holo-[ACP] + adenosine 3',5'-bisphosphate + H(+). In terms of biological role, transfers the 4'-phosphopantetheine moiety from coenzyme A to a Ser of acyl-carrier-protein. This Burkholderia pseudomallei (strain 668) protein is Holo-[acyl-carrier-protein] synthase.